Reading from the N-terminus, the 624-residue chain is Probable potassium transport system protein Kup (624 aa).

12 consecutive transmembrane segments (helical) span residues 13-33 (LALGALGVVFGDIGTSPLYTM), 52-72 (ILSLIFWALILVVSLKYVLVI), 102-122 (WIIMSLGFLGASLFFGDSLIT), 139-159 (PALHPFILPLALGILVGLFAI), 170-190 (LFGPIMLLWFAVLGVLGAIGI), 208-228 (FFMTHGTAGFLILGAVVLAIT), 249-269 (WFGFVLPALVVNYFGQGALLL), 291-311 (MVALATAATVIASQAVISGAF), 339-359 (IYIPFVNWTLAAGVALLVLGF), 368-388 (AYGIAVTATFAIDTVLLALLM), 399-419 (TLVAAALFLTLDLAFFGANAV), and 421-441 (IPEGGWFPLVVAVVVFTILVT).

It belongs to the HAK/KUP transporter (TC 2.A.72) family.

The protein resides in the cell inner membrane. The enzyme catalyses K(+)(in) + H(+)(in) = K(+)(out) + H(+)(out). Its function is as follows. Transport of potassium into the cell. Likely operates as a K(+):H(+) symporter. The polypeptide is Probable potassium transport system protein Kup (Thiobacillus denitrificans (strain ATCC 25259 / T1)).